The chain runs to 363 residues: Ribosomal RNA large subunit methyltransferase M (363 aa).

S-adenosyl-L-methionine is bound by residues Ser187, 220-223 (CPGG), Asp239, Asp259, and Asp276. The active-site Proton acceptor is the Lys305.

Belongs to the class I-like SAM-binding methyltransferase superfamily. RNA methyltransferase RlmE family. RlmM subfamily. Monomer.

The protein localises to the cytoplasm. The enzyme catalyses cytidine(2498) in 23S rRNA + S-adenosyl-L-methionine = 2'-O-methylcytidine(2498) in 23S rRNA + S-adenosyl-L-homocysteine + H(+). Functionally, catalyzes the 2'-O-methylation at nucleotide C2498 in 23S rRNA. The sequence is that of Ribosomal RNA large subunit methyltransferase M from Shewanella loihica (strain ATCC BAA-1088 / PV-4).